Consider the following 417-residue polypeptide: 4-hydroxy-3-methylbut-2-en-1-yl diphosphate synthase (flavodoxin) (417 aa).

[4Fe-4S] cluster is bound by residues cysteine 304, cysteine 307, cysteine 350, and glutamate 357.

It belongs to the IspG family. It depends on [4Fe-4S] cluster as a cofactor.

It catalyses the reaction (2E)-4-hydroxy-3-methylbut-2-enyl diphosphate + oxidized [flavodoxin] + H2O + 2 H(+) = 2-C-methyl-D-erythritol 2,4-cyclic diphosphate + reduced [flavodoxin]. Its pathway is isoprenoid biosynthesis; isopentenyl diphosphate biosynthesis via DXP pathway; isopentenyl diphosphate from 1-deoxy-D-xylulose 5-phosphate: step 5/6. Converts 2C-methyl-D-erythritol 2,4-cyclodiphosphate (ME-2,4cPP) into 1-hydroxy-2-methyl-2-(E)-butenyl 4-diphosphate. In Sinorhizobium medicae (strain WSM419) (Ensifer medicae), this protein is 4-hydroxy-3-methylbut-2-en-1-yl diphosphate synthase (flavodoxin).